The following is a 405-amino-acid chain: Acetylornithine aminotransferase 1 (405 aa).

Pyridoxal 5'-phosphate is bound by residues 103–104 (GA) and Phe136. Residue Arg139 coordinates N(2)-acetyl-L-ornithine. Position 221–224 (221–224 (DEVQ)) interacts with pyridoxal 5'-phosphate. At Lys250 the chain carries N6-(pyridoxal phosphate)lysine. Ser278 contributes to the N(2)-acetyl-L-ornithine binding site. Thr279 provides a ligand contact to pyridoxal 5'-phosphate.

This sequence belongs to the class-III pyridoxal-phosphate-dependent aminotransferase family. ArgD subfamily. As to quaternary structure, homodimer. Pyridoxal 5'-phosphate serves as cofactor.

It localises to the cytoplasm. It catalyses the reaction N(2)-acetyl-L-ornithine + 2-oxoglutarate = N-acetyl-L-glutamate 5-semialdehyde + L-glutamate. Its pathway is amino-acid biosynthesis; L-arginine biosynthesis; N(2)-acetyl-L-ornithine from L-glutamate: step 4/4. This Bradyrhizobium diazoefficiens (strain JCM 10833 / BCRC 13528 / IAM 13628 / NBRC 14792 / USDA 110) protein is Acetylornithine aminotransferase 1.